The chain runs to 600 residues: MSETRKDTDRASAQLPTKCQLPERVAVIGAGPVGCLAALAFAQRGCKVDIFESRPDPRTHEAITRASQRSINLALSTRGITGLRSVSLAGLGVGTNAPNGMDLADLVLQNSVPMRARMIHVVTRQASATQAAEVKEISQLYSTKGESINSVDRGRLNNILLEHALMHRNVEVHFEHKLQSVDFDHDIKSAAKRAGTPPPAIDASANKWLRGANVTGGDSCADEPSGCGGRKQATTKSQGSEYVAPAGTSAVDRVRLDFDVHSTNQHIRKTSNTHYASFVVGCDGAHSSIRSAMGSLIRMHYTHNYIDTGYIELSIPPRTSLGSGSRIRGSGGVDGKRGGHDAFHLDANHLHIWPRHSFMLIALPNLDGSFTCTLFAPFKMFASELSTKEGIVAVFQQHFPDALALIDEEKLVKCLTTRRASALGSVQCDPYHYKDRAVLIGDAAHAMLPFYGQGLNCGFEDVRVMFDIIDQHESLQVALDLYTKERHPDLVAILQLAEQNYREMAHSVVSWPYLLRKKLDGLLMSILPSSMWSSLYAMTTFSNLPYSRVVKTEKRQQAIIGHALVATAVAFVSAAAVGVYSTRALWQPVTVRCIARLHNS.

A disordered region spans residues 217–242 (GDSCADEPSGCGGRKQATTKSQGSEY).

Belongs to the aromatic-ring hydroxylase family. KMO subfamily. It depends on FAD as a cofactor.

It localises to the mitochondrion outer membrane. The catalysed reaction is L-kynurenine + NADPH + O2 + H(+) = 3-hydroxy-L-kynurenine + NADP(+) + H2O. It functions in the pathway cofactor biosynthesis; NAD(+) biosynthesis; quinolinate from L-kynurenine: step 1/3. Its function is as follows. Catalyzes the hydroxylation of L-kynurenine (L-Kyn) to form 3-hydroxy-L-kynurenine (L-3OHKyn). Required for synthesis of quinolinic acid. This chain is Kynurenine 3-monooxygenase, found in Mycosarcoma maydis (Corn smut fungus).